Consider the following 372-residue polypeptide: MSEAGEATTTTTTTLPQAPTEAAAAAPQDPAPKSPVGSGAPQAAAPAPAAHVAGNPGGDAAPAATGTAAAASLATAAGSEDAEKKVLATKVLGTVKWFNVRNGYGFINRNDTKEDVFVHQTAIKKNNPRKYLRSVGDGETVEFDVVEGEKGAEAANVTGPDGVPVEGSRYAADRRRYRRGYYGRRRGPPRNYAGEEEEEGSGSSEGFDPPATDRQFSGARNQLRRPQYRPQYRQRRFPPYHVGQTFDRRSRVLPHPNRIQAGEIGEMKDGVPEGAQLQGPVHRNPTYRPRYRSRGPPRPRPAPAVGEAEDKENQQATSGPNQPSVRRGYRRPYNYRRRPRPPNAPSQDGKEAKAGEAPTENPAPPTQQSSAE.

The segment at Met-1–Ala-82 is disordered. Ser-2 bears the N-acetylserine mark. Residue Ser-2 is modified to Phosphoserine. Residues Ala-7 to Gln-28 show a composition bias toward low complexity. A Phosphoserine modification is found at Ser-34. A compositionally biased stretch (low complexity) spans Pro-35–Ser-79. The region spanning Gly-93–Val-157 is the CSD domain. Ser-134, Ser-201, Ser-203, and Ser-204 each carry phosphoserine. A disordered region spans residues Tyr-181–Glu-372. The span at Gln-222–Pro-238 shows a compositional bias: basic residues. An Omega-N-methylarginine modification is found at Arg-251. Residues Gln-314–Ser-324 show a composition bias toward polar residues. Ser-324 is subject to Phosphoserine. Arg-326 carries the omega-N-methylarginine modification. Residues Arg-327–Arg-340 are compositionally biased toward basic residues. Ser-346, Ser-369, and Ser-370 each carry phosphoserine.

In terms of assembly, found in a mRNP complex with YBX2. Interacts with RRP1B. As to expression, highly expressed in skeletal muscle and heart.

It is found in the cytoplasm. The protein resides in the nucleus. Its function is as follows. Binds to the GM-CSF promoter. Seems to act as a repressor. Also binds to full-length mRNA and to short RNA sequences containing the consensus site 5'-UCCAUCA-3'. May have a role in translation repression. This Homo sapiens (Human) protein is Y-box-binding protein 3 (YBX3).